Consider the following 1249-residue polypeptide: Myosin-1 (1249 aa).

Residues 1–40 are disordered; sequence MGHSRRPAGGEKKSRFGRSKAAADVGDGRQAGGKPQVRKA. Residues 50–729 enclose the Myosin motor domain; sequence IGVSDLTLLS…TLFALEAMRD (680 aa). 143 to 150 lines the ATP pocket; that stretch reads GESGAGKT. Serine 371 carries the post-translational modification Phosphoserine. The actin-binding stretch occupies residues 418–500; the sequence is SIGILDIYGF…PGVFAALNDA (83 aa). IQ domains follow at residues 733-753 and 754-779; these read HNMAIRIQRAWRNYLRYRTEC and AIRIQRFWRRMNGGLELLKLRDQGHT. The 193-residue stretch at 787-979 folds into the TH1 domain; it reads RRRMSILGSR…PGEPPNSVSK (193 aa). Disordered regions lie at residues 959–1081 and 1127–1249; these read DSYK…KAKA and EAYL…DDDW. Low complexity-rich tracts occupy residues 1026-1035 and 1043-1061; these read PQTAAAQPTP and PVAAVAASHSRTSSTASAR. Pro residues predominate over residues 1062–1073; that stretch reads APPPPPPAPPAA. The SH3 domain occupies 1074–1135; the sequence is AGPKKAKALY…PEAYLEEQVA (62 aa). A compositionally biased stretch (pro residues) spans 1137 to 1149; it reads TPKPAPPPPPPVA. The segment covering 1150–1170 has biased composition (low complexity); the sequence is PRASPAPVNGSAAVAAAKAKA. Residues 1199-1221 are compositionally biased toward polar residues; sequence VSMNSQGDSSGASGRGTPSSVSN. Over residues 1222 to 1235 the composition is skewed to low complexity; sequence ASLAGGLAEALRAR.

This sequence belongs to the TRAFAC class myosin-kinesin ATPase superfamily. Myosin family. In terms of assembly, interacts (via IQ domains) with camA. Phosphorylation of the TEDS site (Ser-371) is required for the polarization of the actin cytoskeleton. Phosphorylation probably activates the myosin-I ATPase activity.

Its subcellular location is the cytoplasm. The protein resides in the cytoskeleton. It is found in the actin patch. Functionally, type-I myosin implicated in the organization of the actin cytoskeleton. Required for proper actin cytoskeleton polarization. At the cell cortex, assembles in patch-like structures together with proteins from the actin-polymerizing machinery and promotes actin assembly. Functions as actin nucleation-promoting factor (NPF) for the Arp2/3 complex. Plays an important role in polarized growth, spore germination, hyphal morphogenesis, and septal wall formation. The protein is Myosin-1 (myoA) of Emericella nidulans (strain FGSC A4 / ATCC 38163 / CBS 112.46 / NRRL 194 / M139) (Aspergillus nidulans).